Consider the following 415-residue polypeptide: Serine hydroxymethyltransferase (415 aa).

Residues Leu-122 and 126-128 (GHL) contribute to the (6S)-5,6,7,8-tetrahydrofolate site. Residue Lys-230 is modified to N6-(pyridoxal phosphate)lysine.

This sequence belongs to the SHMT family. Homodimer. It depends on pyridoxal 5'-phosphate as a cofactor.

The protein resides in the cytoplasm. It catalyses the reaction (6R)-5,10-methylene-5,6,7,8-tetrahydrofolate + glycine + H2O = (6S)-5,6,7,8-tetrahydrofolate + L-serine. It functions in the pathway one-carbon metabolism; tetrahydrofolate interconversion. Its pathway is amino-acid biosynthesis; glycine biosynthesis; glycine from L-serine: step 1/1. In terms of biological role, catalyzes the reversible interconversion of serine and glycine with tetrahydrofolate (THF) serving as the one-carbon carrier. This reaction serves as the major source of one-carbon groups required for the biosynthesis of purines, thymidylate, methionine, and other important biomolecules. Also exhibits THF-independent aldolase activity toward beta-hydroxyamino acids, producing glycine and aldehydes, via a retro-aldol mechanism. This chain is Serine hydroxymethyltransferase, found in Cupriavidus necator (strain ATCC 17699 / DSM 428 / KCTC 22496 / NCIMB 10442 / H16 / Stanier 337) (Ralstonia eutropha).